The chain runs to 273 residues: Dermonecrotic toxin LspaSicTox-alphaIA1ii (273 aa).

His5 is an active-site residue. 2 residues coordinate Mg(2+): Glu25 and Asp27. The active-site Nucleophile is the His41. Cystine bridges form between Cys45/Cys51 and Cys47/Cys190. Mg(2+) is bound at residue Asp85.

This sequence belongs to the arthropod phospholipase D family. Class II subfamily. The cofactor is Mg(2+). As to expression, expressed by the venom gland.

It localises to the secreted. The catalysed reaction is an N-(acyl)-sphingosylphosphocholine = an N-(acyl)-sphingosyl-1,3-cyclic phosphate + choline. It catalyses the reaction an N-(acyl)-sphingosylphosphoethanolamine = an N-(acyl)-sphingosyl-1,3-cyclic phosphate + ethanolamine. The enzyme catalyses a 1-acyl-sn-glycero-3-phosphocholine = a 1-acyl-sn-glycero-2,3-cyclic phosphate + choline. It carries out the reaction a 1-acyl-sn-glycero-3-phosphoethanolamine = a 1-acyl-sn-glycero-2,3-cyclic phosphate + ethanolamine. Functionally, dermonecrotic toxins cleave the phosphodiester linkage between the phosphate and headgroup of certain phospholipids (sphingolipid and lysolipid substrates), forming an alcohol (often choline) and a cyclic phosphate. This toxin acts on sphingomyelin (SM). It may also act on ceramide phosphoethanolamine (CPE), lysophosphatidylcholine (LPC) and lysophosphatidylethanolamine (LPE), but not on lysophosphatidylserine (LPS), and lysophosphatidylglycerol (LPG). It acts by transphosphatidylation, releasing exclusively cyclic phosphate products as second products. Induces dermonecrosis, hemolysis, increased vascular permeability, edema, inflammatory response, and platelet aggregation. The polypeptide is Dermonecrotic toxin LspaSicTox-alphaIA1ii (Loxosceles spadicea (Recluse spider)).